The chain runs to 808 residues: MSKNERMVGISRRTLVKSTAIGSLALAAGGFSLPFTLRNAAAAVQQAREKVVWGACSVNCGSRCALRLHVKDNEVTWVETDNTGSDEYGNHQVRACLRGRSIRRRINHPDRLNYPMKRVGKRGEGKFERISWDEALDTIASSLKKTVEQYGNEAVYIQYSSGIVGGNMTRSSPSASAVKRLMNCYGGSLNQYGSYSTAQISCAMPYTYGSNDGNSTTDIENSKLVVMFGNNPAETRMSGGGITYLLEKAREKSNAKMIVIDPRYTDTAAGREDEWLPIRPGTDAALVAGIAWVLINENLVDQPFLDKYCVGYDEKTLPADAPKNGHYKAYILGEGDDKTAKTPQWASQITGIPEDRIIKLAREIGTAKPAYICQGWGPQRQANGELTARAIAMLPILTGNVGISGGNSGARESTYTITIERLPVLDNPVKTSISCFSWTDAIDHGPQMTAIRDGVRGKDKLDVPIKFIWNYAGNTLVNQHSDINKTHEILQDESKCEMIVVIENFMTSSAKYADILLPDLMTVEQEDIIPNDYAGNMGYLIFLQPVTSEKFERKPIYWILSEVAKRLGPDVYQKFTEGRTQEQWLQHLYAKMLAKDPALPSYDELKKMGIYKRKDPNGHFVAYKAFRDDPEANPLKTPSGKIEIYSSRLAEIARTWELEKDEVISPLPVYASTFEGWNSPERRTFPLQLFGFHYKSRTHSTYGNIDLLKAACRQEVWINPIDAQKRGIANGDMVRVFNHRGEVRLPAKVTPRILPGVSAMGQGAWHEANMSGDKIDHGGCVNTLTTLRPSPLAKGNPQHTNLVEIEKI.

Residues 1 to 43 (MSKNERMVGISRRTLVKSTAIGSLALAAGGFSLPFTLRNAAAA) constitute a signal peptide (tat-type signal). Residues 49–110 (EKVVWGACSV…SIRRRINHPD (62 aa)) enclose the 4Fe-4S Mo/W bis-MGD-type domain. [4Fe-4S] cluster-binding residues include Cys56, Cys60, Cys64, and Cys96. Ser196 provides a ligand contact to Mo-bis(molybdopterin guanine dinucleotide).

Belongs to the prokaryotic molybdopterin-containing oxidoreductase family. [4Fe-4S] cluster is required as a cofactor. The cofactor is Mo-bis(molybdopterin guanine dinucleotide). Exported by the Tat system. The position of the signal peptide cleavage has not been experimentally proven.

It localises to the cell membrane. Terminal reductase during anaerobic growth on various sulfoxide and N-oxide compounds. The protein is Putative dimethyl sulfoxide reductase chain YnfE (ynfE) of Escherichia coli (strain K12).